A 411-amino-acid polypeptide reads, in one-letter code: Lissencephaly-1 homolog (411 aa).

The LisH domain occupies 9–41 (QREELNQAIADYLGSNGYADSLETFRKEADLST). Residues 56-83 (TSVIRLQKKVMDLEAKLTEAEKEVIEGA) adopt a coiled-coil conformation. 7 WD repeats span residues 106–147 (GHRA…RSLK), 148–187 (GHTD…ECVK), 191–230 (GHDH…CVKT), 233–272 (GHRE…CKVE), 275–334 (DHEH…CLLT), 337–376 (GHDN…CMKT), and 379–411 (AHQH…WECR).

Belongs to the WD repeat LIS1/nudF family.

Its subcellular location is the cytoplasm. It is found in the cytoskeleton. The protein localises to the microtubule organizing center. The protein resides in the centrosome. Its function is as follows. Positively regulates the activity of the minus-end directed microtubule motor protein dynein. May enhance dynein-mediated microtubule sliding by targeting dynein to the microtubule plus end. Required for several dynein- and microtubule-dependent processes. In Drosophila mojavensis (Fruit fly), this protein is Lissencephaly-1 homolog.